The sequence spans 83 residues: ATP synthase subunit c, chloroplastic (83 aa).

2 helical membrane-spanning segments follow: residues Pro3–Gly23 and Leu57–Ala77.

Belongs to the ATPase C chain family. F-type ATPases have 2 components, F(1) - the catalytic core - and F(0) - the membrane proton channel. F(1) has five subunits: alpha(3), beta(3), gamma(1), delta(1), epsilon(1). F(0) has four main subunits: a(1), b(1), b'(1) and c(10-14). The alpha and beta chains form an alternating ring which encloses part of the gamma chain. F(1) is attached to F(0) by a central stalk formed by the gamma and epsilon chains, while a peripheral stalk is formed by the delta, b and b' chains.

The protein localises to the plastid. It localises to the chloroplast thylakoid membrane. F(1)F(0) ATP synthase produces ATP from ADP in the presence of a proton or sodium gradient. F-type ATPases consist of two structural domains, F(1) containing the extramembraneous catalytic core and F(0) containing the membrane proton channel, linked together by a central stalk and a peripheral stalk. During catalysis, ATP synthesis in the catalytic domain of F(1) is coupled via a rotary mechanism of the central stalk subunits to proton translocation. Functionally, key component of the F(0) channel; it plays a direct role in translocation across the membrane. A homomeric c-ring of between 10-14 subunits forms the central stalk rotor element with the F(1) delta and epsilon subunits. This chain is ATP synthase subunit c, chloroplastic, found in Diacronema lutheri (Unicellular marine alga).